The chain runs to 348 residues: Ileal sodium/bile acid cotransporter (348 aa).

The Extracellular portion of the chain corresponds to 1-28; sequence MNDPNSCVDNATVCSGASCVVPESNFNN. The N-linked (GlcNAc...) asparagine glycan is linked to N10. A helical membrane pass occupies residues 29 to 49; the sequence is ILSVVLSTVLTILLALVMFSM. At 50–82 the chain is on the cytoplasmic side; that stretch reads GCNVEIKKFLGHIKRPWGICVGFLCQFGIMPLT. Residues 83 to 103 traverse the membrane as a helical segment; it reads GFILSVAFDILPLQAVVVLII. Residues 104–126 lie on the Extracellular side of the membrane; sequence GCCPGGTASNILAYWVDGDMDLS. A helical transmembrane segment spans residues 127 to 147; that stretch reads VSMTTCSTLLALGMMPLCLLI. Residues 148 to 157 lie on the Cytoplasmic side of the membrane; the sequence is YTKMWVDSGS. The chain crosses the membrane as a helical span at residues 158 to 178; sequence IVIPYDNIGTSLVSLVVPVSI. The Extracellular segment spans residues 179–195; the sequence is GMFVNHKWPQKAKIILK. Residues 196 to 216 form a helical membrane-spanning segment; it reads IGSIAGAILIVLIAVVGGILY. Over 217–224 the chain is Cytoplasmic; that stretch reads QSAWIIAP. Residues 225–245 traverse the membrane as a helical segment; the sequence is KLWIIGTIFPVAGYSLGFLLA. Over 246-284 the chain is Extracellular; that stretch reads RIAGLPWYRCRTVAFETGMQNTQLCSTIVQLSFTPEELN. The chain crosses the membrane as a helical span at residues 285–305; that stretch reads VVFTFPLIYSIFQLAFAAIFL. The Cytoplasmic segment spans residues 306 to 348; sequence GFYVAYKKCHGKNKAEIPESKENGTEPESSFYKANGGFQPDEK. Over residues 320–329 the composition is skewed to basic and acidic residues; it reads AEIPESKENG. A disordered region spans residues 320-348; that stretch reads AEIPESKENGTEPESSFYKANGGFQPDEK. Residue S335 is modified to Phosphoserine.

This sequence belongs to the bile acid:sodium symporter (BASS) (TC 2.A.28) family. Monomer and homodimer. Mainly expressed in ileum and kidney, lower expression in cecum.

It is found in the membrane. It catalyses the reaction taurocholate(out) + 2 Na(+)(out) = taurocholate(in) + 2 Na(+)(in). The catalysed reaction is cholate(out) + 2 Na(+)(out) = cholate(in) + 2 Na(+)(in). The enzyme catalyses taurochenodeoxycholate(out) + 2 Na(+)(out) = taurochenodeoxycholate(in) + 2 Na(+)(in). It carries out the reaction tauroursodeoxycholate(out) + 2 Na(+)(out) = tauroursodeoxycholate(in) + 2 Na(+)(in). It catalyses the reaction glycocholate(out) + 2 Na(+)(out) = glycocholate(in) + 2 Na(+)(in). The catalysed reaction is tauronorcholate(out) + 2 Na(+)(out) = tauronorcholate(in) + 2 Na(+)(in). The enzyme catalyses tauroallocholate(out) + 2 Na(+)(out) = tauroallocholate(in) + 2 Na(+)(in). It carries out the reaction taurodeoxycholate(out) + 2 Na(+)(out) = taurodeoxycholate(in) + 2 Na(+)(in). It catalyses the reaction tauro-beta-muricholate(out) + 2 Na(+)(out) = tauro-beta-muricholate(in) + 2 Na(+)(in). Plays a critical role in the sodium-dependent reabsorption of bile acids from the lumen of the small intestine. Transports various bile acids, unconjugated or conjugated, such as cholate and taurocholate. Also responsible for bile acid transport in the renal proximal tubules, a salvage mechanism that helps conserve bile acids. Works collaboratively with the Na(+)-taurocholate cotransporting polypeptide (NTCP), the organic solute transporter (OST), and the bile salt export pump (BSEP), to ensure efficacious biological recycling of bile acids during enterohepatic circulation. This is Ileal sodium/bile acid cotransporter (SLC10A2) from Homo sapiens (Human).